A 383-amino-acid chain; its full sequence is 3-ketosteroid-9-alpha-monooxygenase, oxygenase component (383 aa).

One can recognise a Rieske domain in the interval 24 to 126; the sequence is WHCLGPVKNF…TDVRGGLLFV (103 aa). Residues Cys-65, His-67, Cys-84, and His-87 each contribute to the [2Fe-2S] cluster site. The Fe cation site is built by Asn-173, His-179, His-184, and Asp-302.

As to quaternary structure, homotrimer. The two-component system 3-ketosteroid-9-alpha-monooxygenase is composed of an oxygenase component KshA and a reductase component KshB. [2Fe-2S] cluster is required as a cofactor. The cofactor is Fe cation.

The enzyme catalyses androsta-1,4-diene-3,17-dione + 2 reduced [2Fe-2S]-[ferredoxin] + O2 + 2 H(+) = 9alpha-hydroxyandrosta-1,4-diene-3,17-dione + 2 oxidized [2Fe-2S]-[ferredoxin] + H2O. It functions in the pathway lipid metabolism; steroid biosynthesis. Involved in the degradation of cholesterol. Catalyzes the introduction of a 9a-hydroxyl moiety into 1,4-androstadiene-3,17-dione (ADD) to yield the 9alpha-hydroxy-1,4-androstadiene-3,17-dione (9OHADD) intermediate which spontaneously form 3-hydroxy-9,10-seconandrost-1,3,5(10)-triene-9,17-dione (HSA) via the meta-cleavage of ring B with concomitant aromatization of ring A. In Mycolicibacterium smegmatis (strain ATCC 700084 / mc(2)155) (Mycobacterium smegmatis), this protein is 3-ketosteroid-9-alpha-monooxygenase, oxygenase component (kshA).